A 324-amino-acid chain; its full sequence is dITP/XTP pyrophosphatase (324 aa).

Residues 1 to 126 (MTKSIFEYKD…SDNKSDFGDV (126 aa)) form a unknown region. The NTP pyrophosphatase stretch occupies residues 127–324 (LLIATRNEGK…EVFPAWQNKQ (198 aa)). Residue 131 to 136 (TRNEGK) participates in substrate binding. Asp193 acts as the Proton acceptor in catalysis. Asp193 lines the Mg(2+) pocket. Substrate-binding positions include Ser194, 277 to 280 (FGYD), Lys300, and 305 to 306 (HR).

Belongs to the HAM1 NTPase family. In terms of assembly, homodimer. It depends on Mg(2+) as a cofactor.

The catalysed reaction is XTP + H2O = XMP + diphosphate + H(+). It carries out the reaction dITP + H2O = dIMP + diphosphate + H(+). The enzyme catalyses ITP + H2O = IMP + diphosphate + H(+). Its function is as follows. Pyrophosphatase that catalyzes the hydrolysis of nucleoside triphosphates to their monophosphate derivatives, with a high preference for the non-canonical purine nucleotides XTP (xanthosine triphosphate), dITP (deoxyinosine triphosphate) and ITP. Seems to function as a house-cleaning enzyme that removes non-canonical purine nucleotides from the nucleotide pool, thus preventing their incorporation into DNA/RNA and avoiding chromosomal lesions. In Streptococcus thermophilus (strain ATCC BAA-250 / LMG 18311), this protein is dITP/XTP pyrophosphatase.